The primary structure comprises 176 residues: Adenylyl-sulfate kinase (176 aa).

ATP is bound at residue 12-19; the sequence is GLSGAGKS. Ser-86 acts as the Phosphoserine intermediate in catalysis.

This sequence belongs to the APS kinase family.

The enzyme catalyses adenosine 5'-phosphosulfate + ATP = 3'-phosphoadenylyl sulfate + ADP + H(+). The protein operates within sulfur metabolism; hydrogen sulfide biosynthesis; sulfite from sulfate: step 2/3. Functionally, catalyzes the synthesis of activated sulfate. The chain is Adenylyl-sulfate kinase from Gloeothece citriformis (strain PCC 7424) (Cyanothece sp. (strain PCC 7424)).